We begin with the raw amino-acid sequence, 180 residues long: Large ribosomal subunit protein uL16 (180 aa).

It belongs to the universal ribosomal protein uL16 family.

The sequence is that of Large ribosomal subunit protein uL16 from Thermococcus sibiricus (strain DSM 12597 / MM 739).